An 852-amino-acid chain; its full sequence is Replication factor C small subunit (852 aa).

The DOD-type homing endonuclease domain occupies 183 to 306 (WLGYFMGSGY…IAYALASFGI (124 aa)).

This sequence belongs to the activator 1 small subunits family. RfcS subfamily. In terms of assembly, heteromultimer composed of three to four small subunits (RfcS) and one to two large subunits (RfcL). Post-translationally, this protein undergoes a protein self splicing that involves a post-translational excision of the intervening region (intein) followed by peptide ligation.

Functionally, part of the RFC clamp loader complex which loads the PCNA sliding clamp onto DNA. The complex possesses DNA-dependent ATPase activity which is further stimulated by PCNA. The polypeptide is Replication factor C small subunit (rfcS) (Pyrococcus furiosus (strain ATCC 43587 / DSM 3638 / JCM 8422 / Vc1)).